Reading from the N-terminus, the 328-residue chain is 4-hydroxythreonine-4-phosphate dehydrogenase (328 aa).

Substrate is bound at residue threonine 125. A divalent metal cation contacts are provided by histidine 160, histidine 203, and histidine 269. Residues lysine 277, asparagine 286, and arginine 295 each contribute to the substrate site.

It belongs to the PdxA family. Homodimer. It depends on a divalent metal cation as a cofactor.

The protein resides in the cytoplasm. The catalysed reaction is 4-(phosphooxy)-L-threonine + NAD(+) = 3-amino-2-oxopropyl phosphate + CO2 + NADH. It functions in the pathway cofactor biosynthesis; pyridoxine 5'-phosphate biosynthesis; pyridoxine 5'-phosphate from D-erythrose 4-phosphate: step 4/5. In terms of biological role, catalyzes the NAD(P)-dependent oxidation of 4-(phosphooxy)-L-threonine (HTP) into 2-amino-3-oxo-4-(phosphooxy)butyric acid which spontaneously decarboxylates to form 3-amino-2-oxopropyl phosphate (AHAP). The chain is 4-hydroxythreonine-4-phosphate dehydrogenase from Synechococcus sp. (strain RCC307).